The sequence spans 415 residues: Serine hydroxymethyltransferase (415 aa).

Residues Leu122 and 126-128 each bind (6S)-5,6,7,8-tetrahydrofolate; that span reads GHL. Lys230 carries the post-translational modification N6-(pyridoxal phosphate)lysine.

Belongs to the SHMT family. In terms of assembly, homodimer. Pyridoxal 5'-phosphate serves as cofactor.

It localises to the cytoplasm. It carries out the reaction (6R)-5,10-methylene-5,6,7,8-tetrahydrofolate + glycine + H2O = (6S)-5,6,7,8-tetrahydrofolate + L-serine. The protein operates within one-carbon metabolism; tetrahydrofolate interconversion. It functions in the pathway amino-acid biosynthesis; glycine biosynthesis; glycine from L-serine: step 1/1. Catalyzes the reversible interconversion of serine and glycine with tetrahydrofolate (THF) serving as the one-carbon carrier. This reaction serves as the major source of one-carbon groups required for the biosynthesis of purines, thymidylate, methionine, and other important biomolecules. Also exhibits THF-independent aldolase activity toward beta-hydroxyamino acids, producing glycine and aldehydes, via a retro-aldol mechanism. The sequence is that of Serine hydroxymethyltransferase from Ralstonia pickettii (strain 12J).